The primary structure comprises 208 residues: Ribosome maturation factor RimP (208 aa).

Belongs to the RimP family.

Its subcellular location is the cytoplasm. Functionally, required for maturation of 30S ribosomal subunits. The chain is Ribosome maturation factor RimP from Bartonella tribocorum (strain CIP 105476 / IBS 506).